A 155-amino-acid polypeptide reads, in one-letter code: 17.6 kDa class II heat shock protein (155 aa).

The sHSP domain maps to 38-155 (DAKAMAATPA…KPKTIQVQVA (118 aa)).

The protein belongs to the small heat shock protein (HSP20) family. In terms of assembly, may form oligomeric structures.

Its subcellular location is the cytoplasm. The sequence is that of 17.6 kDa class II heat shock protein (HSP17.6) from Arabidopsis thaliana (Mouse-ear cress).